The chain runs to 272 residues: Shikimate dehydrogenase (NADP(+)) (272 aa).

Shikimate is bound by residues 14-16 (SKS) and T61. The active-site Proton acceptor is K65. E77 lines the NADP(+) pocket. Residues N86 and D102 each contribute to the shikimate site. Residues 126–130 (GAGGA), 149–154 (NRTVSR), and M213 contribute to the NADP(+) site. Shikimate is bound at residue Y215. G237 contacts NADP(+).

It belongs to the shikimate dehydrogenase family. As to quaternary structure, homodimer.

It catalyses the reaction shikimate + NADP(+) = 3-dehydroshikimate + NADPH + H(+). It functions in the pathway metabolic intermediate biosynthesis; chorismate biosynthesis; chorismate from D-erythrose 4-phosphate and phosphoenolpyruvate: step 4/7. Involved in the biosynthesis of the chorismate, which leads to the biosynthesis of aromatic amino acids. Catalyzes the reversible NADPH linked reduction of 3-dehydroshikimate (DHSA) to yield shikimate (SA). The sequence is that of Shikimate dehydrogenase (NADP(+)) from Shigella boydii serotype 4 (strain Sb227).